We begin with the raw amino-acid sequence, 253 residues long: rRNA adenine N-6-methyltransferase (253 aa).

S-adenosyl-L-methionine contacts are provided by Asn14, Leu16, Gly40, Glu61, Asp85, and Asn101. The disordered stretch occupies residues 229–253; it reads CAREESTPRPYLPDCTPTTGSISSR. Over residues 244–253 the composition is skewed to polar residues; the sequence is TPTTGSISSR.

It belongs to the class I-like SAM-binding methyltransferase superfamily. rRNA adenine N(6)-methyltransferase family.

Functionally, involved in erythromycin resistance. This Corynebacterium diphtheriae protein is rRNA adenine N-6-methyltransferase (ermA).